The chain runs to 251 residues: Maleate isomerase (251 aa).

Residues Asn15, 81 to 83 (CLV), Tyr138, and Asn168 contribute to the substrate site. Residue Cys81 is the Nucleophile of the active site. An S-(2-succinyl)cysteine modification is found at Cys81. Cys199 (proton donor) is an active-site residue. Substrate is bound at residue 200–201 (VQ).

The protein belongs to the maleate isomerase family. In terms of assembly, homodimer.

It catalyses the reaction maleate = fumarate. In terms of biological role, catalyzes cis-trans isomerization of the C2-C3 double bond in maleate to yield fumarate. The polypeptide is Maleate isomerase (Geobacillus stearothermophilus (Bacillus stearothermophilus)).